A 95-amino-acid polypeptide reads, in one-letter code: Large ribosomal subunit protein bL25 (95 aa).

Belongs to the bacterial ribosomal protein bL25 family. In terms of assembly, part of the 50S ribosomal subunit; part of the 5S rRNA/L5/L18/L25 subcomplex. Contacts the 5S rRNA. Binds to the 5S rRNA independently of L5 and L18.

Its function is as follows. This is one of the proteins that binds to the 5S RNA in the ribosome where it forms part of the central protuberance. This Mannheimia succiniciproducens (strain KCTC 0769BP / MBEL55E) protein is Large ribosomal subunit protein bL25.